Reading from the N-terminus, the 1410-residue chain is Slit homolog 1 protein (1410 aa).

A signal peptide spans 1–16 (MLICFIFILLIPESAT). The LRRNT 1 domain maps to 17–43 (CPAECVCVDRTVSCVGQQLTEVPQNIP). 20 LRR repeats span residues 22-42 (VCVD…PQNI), 43-66 (PNDT…DFSS), 67-90 (LMNL…SFSS), 91-114 (LVFL…VFQN), 116-138 (LKLT…QLQG), 140-162 (EFLE…VISS), 163-186 (WVSL…SNAR), 219-242 (TVCA…FMTC), 286-309 (PPST…SFKN), 310-333 (LKNL…AFLG), 335-357 (HNLH…TFEG), 358-381 (LGSL…TFDH), 383-405 (PKLS…TFQN), 407-430 (TSLS…WLAQ), 442-465 (ARCE…KFKC), 489-510 (CDCY…PTSI), 511-535 (PRFA…NIHV), 536-559 (LENL…SFEK), 561-583 (SKLR…VLDE), and 585-607 (SNLE…FFNK). The LRRCT 1 domain occupies 195-243 (NPWNCDCRLRWMRKWLEKAEGQNKTVCATPLNLQGSSIEILQDKFMTCS). The LRRNT 2 domain maps to 259–286 (ICPLPCTCTGTTVDCRDSGLTYVPTNLP). The LRRCT 2 domain occupies 417–466 (NPLICDCNLQWLAQINLQKNIETSGARCEQPKRLRKKKFATLPPNKFKCK). Residues 484–511 (ICPTQCDCYGTTVDCNKRGLNTIPTSIP) form the LRRNT 3 domain. The region spanning 619 to 671 (NDLLCDCRILPLMSWLRSNSSHSIDIPPCQQFQYSDNESDKQRCAAFPEETCS) is the LRRCT 3 domain. The 27-residue stretch at 677 to 703 (CPPKCSCLDRVVRCSNKNLTSFPSRIP) folds into the LRRNT 4 domain. 6 LRR repeats span residues 681–703 (CSCL…SRIP), 704–726 (FDTT…DLNR), 727–750 (LYSL…TFSN), 752–774 (TRLS…AFNG), 775–798 (LNAL…AFSN), and 800–823 (TSIT…WFSK). The region spanning 810–859 (NSLYCDCNMAWFSKWIKSKFIEAGIARCEYPNTVSNQLLLTAQPYQFTCD) is the LRRCT 4 domain. EGF-like domains are found at residues 871-906 (DLCL…VHCE) and 908-945 (QIDA…DYCE). 18 disulfide bridges follow: cysteine 873–cysteine 884, cysteine 878–cysteine 894, cysteine 896–cysteine 905, cysteine 912–cysteine 923, cysteine 917–cysteine 933, cysteine 935–cysteine 944, cysteine 951–cysteine 962, cysteine 956–cysteine 971, cysteine 973–cysteine 982, cysteine 989–cysteine 1002, cysteine 996–cysteine 1011, cysteine 1013–cysteine 1022, cysteine 1029–cysteine 1040, cysteine 1034–cysteine 1049, cysteine 1051–cysteine 1060, cysteine 1076–cysteine 1086, cysteine 1081–cysteine 1097, and cysteine 1099–cysteine 1108. The EGF-like 1; calcium-binding domain maps to 947–983 (NIDDCVNSKCENGGKCVDLINSYRCDCPMEYEGKHCE). One can recognise an EGF-like 3 domain in the interval 985-1023 (KLEYCTKKLNPCENNGKCIPINGSYSCMCSPGFTGNNCE). Positions 1025–1061 (NIDDCKNVECQNGGSCVDGILSYDCLCRPGYAGQYCE) constitute an EGF-like 2; calcium-binding domain. Residues 1072–1109 (KTDACQQSACGQGECVASQNSSDFTCKCHEGFSGPSCD) enclose the EGF-like 4 domain. The 174-residue stretch at 1112–1285 (MSVGFKNPGA…LENVNTEQSC (174 aa)) folds into the Laminin G-like domain. One copy of the LRR 27 repeat lies at 1197–1221 (TSERKCFLQIDKNPVQIVENSGKSD). Intrachain disulfides connect cysteine 1259–cysteine 1285, cysteine 1292–cysteine 1302, cysteine 1297–cysteine 1314, cysteine 1316–cysteine 1325, cysteine 1332–cysteine 1368, cysteine 1346–cysteine 1382, cysteine 1357–cysteine 1398, and cysteine 1361–cysteine 1400. An EGF-like 5 domain is found at 1288 to 1326 (TVNFCAGIDCGNGKCTNNALSPKGYMCQCDSHFSGEHCD). Positions 1332–1406 (CDKQKFRRHH…QCQCEPTKSV (75 aa)) constitute a CTCK domain.

As to quaternary structure, interacts with eva-1.

The protein localises to the secreted. Its function is as follows. Functions as a ligand for sax-3 receptor during larval development. Acts via the sax-3/Robo receptor to direct ventral axon guidance and guidance at the midline during embryonic development. The chain is Slit homolog 1 protein (slt-1) from Caenorhabditis elegans.